We begin with the raw amino-acid sequence, 606 residues long: Sodium-independent sulfate anion transporter (606 aa).

The Extracellular portion of the chain corresponds to methionine 1 to aspartate 51. Residues phenylalanine 52–valine 72 form a helical membrane-spanning segment. A topological domain (cytoplasmic) is located at residue alanine 73. A helical transmembrane segment spans residues glycine 74–leucine 94. Residues glycine 95–valine 100 lie on the Extracellular side of the membrane. Residues threonine 101–phenylalanine 117 form a helical membrane-spanning segment. The Cytoplasmic segment spans residues histidine 118–glutamate 119. Residues proline 120 to leucine 140 traverse the membrane as a helical segment. The Extracellular portion of the chain corresponds to arginine 141–aspartate 147. Residues phenylalanine 148–glycine 168 traverse the membrane as a helical segment. Residues glutamine 169 to threonine 197 lie on the Cytoplasmic side of the membrane. The helical transmembrane segment at arginine 198–methionine 218 threads the bilayer. Topologically, residues arginine 219–leucine 250 are extracellular. The chain crosses the membrane as a helical span at residues valine 251–isoleucine 271. At leucine 272–glycine 307 the chain is on the cytoplasmic side. A helical membrane pass occupies residues alanine 308–phenylalanine 328. Topologically, residues alanine 329 to glutamate 341 are extracellular. Residues leucine 342–glycine 362 traverse the membrane as a helical segment. Residues serine 363–glycine 374 are Cytoplasmic-facing. Residues valine 375–leucine 395 traverse the membrane as a helical segment. The Extracellular segment spans residues threonine 396 to leucine 398. Residues phenylalanine 399–phenylalanine 419 form a helical membrane-spanning segment. Over aspartate 420–threonine 441 the chain is Cytoplasmic. Residues phenylalanine 442–leucine 462 traverse the membrane as a helical segment. The Extracellular portion of the chain corresponds to methionine 463–alanine 606. One can recognise an STAS domain in the interval arginine 470 to proline 584.

The protein belongs to the SLC26A/SulP transporter (TC 2.A.53) family. In terms of tissue distribution, detected in all tissues tested with highest expression observed in brain, kidney, HEVEC and placenta and lowest in pancreas, skeletal muscle, liver, lung and heart.

It localises to the cell membrane. The protein resides in the lysosome membrane. Its subcellular location is the apical cell membrane. It is found in the basolateral cell membrane. It carries out the reaction hydrogencarbonate(in) + chloride(out) = hydrogencarbonate(out) + chloride(in). The enzyme catalyses sulfate(in) + H(+)(in) = sulfate(out) + H(+)(out). The catalysed reaction is oxalate(in) + chloride(out) = oxalate(out) + chloride(in). Sodium-independent anion exchanger mediating bicarbonate, chloride, sulfate and oxalate transport. Exhibits sodium-independent sulfate anion transporter activity that may cooperate with SLC26A2 to mediate DIDS-sensitive sulfate uptake into high endothelial venules endothelial cells (HEVEC). In the kidney, mediates chloride-bicarbonate exchange, facilitating V-ATPase-mediated acid secretion. May function as a chloride channel, playing an important role in moderating chloride homeostasis and neuronal activity in the cerebellum. This is Sodium-independent sulfate anion transporter from Homo sapiens (Human).